The chain runs to 426 residues: 3-phosphoshikimate 1-carboxyvinyltransferase (426 aa).

3-phosphoshikimate-binding residues include Lys22, Ser23, and Arg27. A phosphoenolpyruvate-binding site is contributed by Lys22. Phosphoenolpyruvate contacts are provided by Gly96 and Arg124. Residues Ser170, Ser171, Gln172, Ser198, Asp314, Asn337, and Lys341 each coordinate 3-phosphoshikimate. Gln172 provides a ligand contact to phosphoenolpyruvate. Catalysis depends on Asp314, which acts as the Proton acceptor. Residues Arg345, Arg387, and Lys412 each coordinate phosphoenolpyruvate.

This sequence belongs to the EPSP synthase family. In terms of assembly, monomer.

It is found in the cytoplasm. The catalysed reaction is 3-phosphoshikimate + phosphoenolpyruvate = 5-O-(1-carboxyvinyl)-3-phosphoshikimate + phosphate. Its pathway is metabolic intermediate biosynthesis; chorismate biosynthesis; chorismate from D-erythrose 4-phosphate and phosphoenolpyruvate: step 6/7. Catalyzes the transfer of the enolpyruvyl moiety of phosphoenolpyruvate (PEP) to the 5-hydroxyl of shikimate-3-phosphate (S3P) to produce enolpyruvyl shikimate-3-phosphate and inorganic phosphate. In Aliivibrio fischeri (strain MJ11) (Vibrio fischeri), this protein is 3-phosphoshikimate 1-carboxyvinyltransferase.